A 653-amino-acid chain; its full sequence is Protein CBFA2T3 (653 aa).

The span at Met1–Ala10 shows a compositional bias: basic and acidic residues. The interval Met1 to Thr109 is disordered. The tract at residues Met1–Leu127 is required for nucleolar targeting (in isoform 1). A mediates interaction with PDE7A (in isoform 2) region spans residues Met1–Glu430. Residues Met1–Ala435 are mediates localization to the nucleus. Residues Ala11–Ser23 show a composition bias toward low complexity. Positions Ser75–Ala86 are enriched in pro residues. The tract at residues Pro145–Leu242 is interaction with ZBTB33. The region spanning Ala171–Glu266 is the TAFH domain. Residues Lys176–Leu268 are interaction with HIF1A. Residues Leu284–Tyr342 are disordered. A compositionally biased stretch (basic and acidic residues) spans Glu289–Ser315. The segment covering Asn331 to His341 has biased composition (pro residues). The nervy homology region 2 (NHR2); essential for down-regulation of PFKFB3, PFKFB4 and PDK1 expression stretch occupies residues Glu394–Lys412. Residues Trp434–Lys446 show a composition bias toward basic and acidic residues. The segment at Trp434–Glu472 is disordered. The segment covering Gly447–Pro462 has biased composition (low complexity). Ser457 and Ser459 each carry phosphoserine. Thr479 bears the Phosphothreonine mark. The mediates interaction with PRKAR2A stretch occupies residues Asp485–Gln506. The tract at residues Asp485–Glu533 is nervy homology region 3 (NHR3); essential for down-regulation of PFKFB3, PFKFB4 and PDK1 expression. Residues Arg488–Leu543 are a coiled coil. Positions 556, 559, 567, 570, 576, 580, 588, and 592 each coordinate Zn(2+). An MYND-type zinc finger spans residues Cys556 to Cys592. The interval Val603–Arg653 is disordered. The span at Pro622–Arg638 shows a compositional bias: low complexity. Ser637 and Ser641 each carry phosphoserine. Thr650 carries the phosphothreonine modification.

This sequence belongs to the CBFA2T family. As to quaternary structure, homooligomer. Homotetramerization is mediated by nervy homology region 2 (NRH2). Can interact with RUNX1T1 and CBFA2T2; heterotetramerization between members of the CBFA2T family is proposed. Component of a TAL-1 complex composed at least of CBFA2T3, LDB1, TAL1 and TCF3. Interacts with ERBB4, HDAC1, HDAC2, HDAC3, HDAC6, HDAC8, NCOR1, NCOR2, and ZNF652. According to PubMed:12242670, may not interact with HDAC6. Interacts with PLXNA1, PLXNA3 and PRKAR1A. Isoform 2 interacts with PRKAR2A, PDE7A and probably PDE4A. Interacts with ZBTB4, ZBTB38 and ZBTB33. Interacts with HIF1A and EGLN1. Interacts with the AML1-MTG8/ETO fusion protein. As to expression, widely expressed with higher expression in heart, pancreas, skeletal muscle, spleen, thymus and peripheral blood leukocytes. Expressed in hematopoietic cells (at protein level).

It is found in the nucleus. The protein localises to the nucleolus. The protein resides in the nucleoplasm. It localises to the golgi apparatus membrane. Its function is as follows. Transcriptional corepressor which facilitates transcriptional repression via its association with DNA-binding transcription factors and recruitment of other corepressors and histone-modifying enzymes. Can repress the expression of MMP7 in a ZBTB33-dependent manner. Reduces the protein levels and stability of the transcriptinal regulator HIF1A; interacts with EGLN1 and promotes the HIF1A prolyl hydroxylation-dependent ubiquitination and proteasomal degradation pathway. Contributes to inhibition of glycolysis and stimulation of mitochondrial respiration by down-regulating the expression of glycolytic genes including PFKFB3, PFKFB4, PDK1, PFKP, LDHA and HK1 which are direct targets of HIF1A. Regulates the proliferation and the differentiation of erythroid progenitors by repressing the expression of TAL1 target genes. Plays a role in granulocyte differentiation. Isoform 2 functions as an A-kinase-anchoring protein. This Homo sapiens (Human) protein is Protein CBFA2T3 (CBFA2T3).